We begin with the raw amino-acid sequence, 563 residues long: MNTKELIASELASIIDSLDQEAILKLLETPKNSEMGDIAFPAFSLAKVERKAPQMIATELAEKMNSQAFEKVVATGPYVNFFLDKSAISAQVLQAVTTEKEHYADQNIGKQENVVIDMSSPNIAKPFSIGHLRSTVIGDSLSHIFQKIGYQTVKVNHLGDWGKQFGMLIVAYKKWGDEEAVKAHPIDELLKLYVRINAEAENDPSLDEEAREWFRKLENGDEEALALWQWFRDESLVEFNRLYNELKVEFDSYNGEAFYNDKMDAVVDILSEKGLLLESEGAQVVNLEKYGIEHPALIKKSDGATLYITRDLAAALYRKNEYQFAKSIYVVGQEQSAHFKQLKAVLQEMGYDWSDDITHVPFGLVTKEGKKLSTRKGNVILLEPTVAEAVSRAKVQIEAKNPELENKDQIAHAVGVGAIKFYDLKTDRTNGYDFDLEAMVSFEGETGPYVQYAYARIQSILRKADFKPETAGNYSLNDTESWEIIKLIQDFPRIINRAADNFEPSIIAKFAISLAQSFNKYYAHTRILDESPERDSRLALSYATAVVLKEALRLLGVEAPEKM.

The 'HIGH' region motif lies at 121–131 (PNIAKPFSIGH).

The protein belongs to the class-I aminoacyl-tRNA synthetase family. In terms of assembly, monomer.

It is found in the cytoplasm. It carries out the reaction tRNA(Arg) + L-arginine + ATP = L-arginyl-tRNA(Arg) + AMP + diphosphate. In Streptococcus pneumoniae serotype 19F (strain G54), this protein is Arginine--tRNA ligase.